A 290-amino-acid polypeptide reads, in one-letter code: Shikimate dehydrogenase (NADP(+)) (290 aa).

Residues 18–20 (SYS) and threonine 66 each bind shikimate. Residue lysine 70 is the Proton acceptor of the active site. Shikimate contacts are provided by asparagine 91 and aspartate 106. NADP(+)-binding positions include 130-134 (GNGGA) and methionine 230. Tyrosine 232 provides a ligand contact to shikimate. Glycine 253 is an NADP(+) binding site.

The protein belongs to the shikimate dehydrogenase family. In terms of assembly, homodimer.

The catalysed reaction is shikimate + NADP(+) = 3-dehydroshikimate + NADPH + H(+). It participates in metabolic intermediate biosynthesis; chorismate biosynthesis; chorismate from D-erythrose 4-phosphate and phosphoenolpyruvate: step 4/7. Functionally, involved in the biosynthesis of the chorismate, which leads to the biosynthesis of aromatic amino acids. Catalyzes the reversible NADPH linked reduction of 3-dehydroshikimate (DHSA) to yield shikimate (SA). The protein is Shikimate dehydrogenase (NADP(+)) of Prosthecochloris aestuarii (strain DSM 271 / SK 413).